The chain runs to 65 residues: Beta-toxin Am IT (65 aa).

Glu-1 bears the Pyrrolidone carboxylic acid (Glu); partial mark. The region spanning 1–64 (EHGYLLDKYT…LWNYKTNKCK (64 aa)) is the LCN-type CS-alpha/beta domain. 4 disulfides stabilise this stretch: Cys-12–Cys-63, Cys-16–Cys-38, Cys-23–Cys-45, and Cys-27–Cys-47. Serine amide is present on Ser-65.

The protein belongs to the long (4 C-C) scorpion toxin superfamily. Sodium channel inhibitor family. Expressed by the venom gland.

The protein resides in the secreted. Has a toxic effect on insects and mammals. On German cockroach larvae, it provokes contraction, paralysis and lethality. Intracerebroventricular injection into mice causes severe neurotoxic symptoms. It fully competes with the binding of the iodinated Css4 (AC P60266) on rat brain synaptosomes, with moderate affinity and in a concentration-dependent manner (EC(50)=25 nM). It may act on both site 3 and site 4 of voltage-gated sodium channels. The polypeptide is Beta-toxin Am IT (Androctonus mauritanicus mauritanicus (Scorpion)).